The following is a 494-amino-acid chain: MKLFELSVKELRRLLVQKEVSPLEVVENLLCRIAEVDPKIFAYIYLNHERALEASKKADISLPLGGVPVAIKDNINVLGEPCRCASRILEGYLAPYDSTVIEKLKKAGAILLGRTNMDEFAMGSSTENSSVGITRNPWNTERVPGGSSGGSAAAVAAHEAFCALGSDTGGSIRQPAAFCGCVGLKPTYGRVSRYGLTAFASSLDQIGPITKTVEDAALLLEVISGFDPFDNTSEKLPVPRFSELLENRPLKDFVLGIPKEYFIEGIDGEVRQALSQVIGHYEKLGVKIEEVSLPHTPYAVATYYILATAEASANLARFDGIRYGKRAKNYNDLIDYYGKTRDEGFGSEVKRRILLGTYVLSSGYYDAYYLRALKVKEKIKQDFSLAFQKCQALLTPTSPFCAFRIGEKTSDPLQMYLADIFTIAVNLAGICALSIPCGRSTEGLPIGFQLIGPAWKEETILALGYIYQKTTGWVPPLPPLGGPTGGGGADGLPL.

Catalysis depends on charge relay system residues Lys72 and Ser147. Ser171 serves as the catalytic Acyl-ester intermediate.

The protein belongs to the amidase family. GatA subfamily. In terms of assembly, heterotrimer of A, B and C subunits.

The catalysed reaction is L-glutamyl-tRNA(Gln) + L-glutamine + ATP + H2O = L-glutaminyl-tRNA(Gln) + L-glutamate + ADP + phosphate + H(+). In terms of biological role, allows the formation of correctly charged Gln-tRNA(Gln) through the transamidation of misacylated Glu-tRNA(Gln) in organisms which lack glutaminyl-tRNA synthetase. The reaction takes place in the presence of glutamine and ATP through an activated gamma-phospho-Glu-tRNA(Gln). This is Glutamyl-tRNA(Gln) amidotransferase subunit A from Methylacidiphilum infernorum (isolate V4) (Methylokorus infernorum (strain V4)).